Here is a 214-residue protein sequence, read N- to C-terminus: Redox-sensing transcriptional repressor Rex (214 aa).

The segment at residues 18–57 is a DNA-binding region (H-T-H motif); sequence LYYRLVNQLHEKGIDRVNSKTISEALDIDSASIRRDFSYF. Position 92 to 97 (92 to 97) interacts with NAD(+); that stretch reads GVGNLG.

This sequence belongs to the transcriptional regulatory Rex family. In terms of assembly, homodimer.

The protein resides in the cytoplasm. In terms of biological role, modulates transcription in response to changes in cellular NADH/NAD(+) redox state. This chain is Redox-sensing transcriptional repressor Rex, found in Staphylococcus carnosus (strain TM300).